Here is a 274-residue protein sequence, read N- to C-terminus: Diaminopimelate epimerase (274 aa).

Substrate-binding residues include N11, Q44, and N64. C73 functions as the Proton donor in the catalytic mechanism. Residues 74–75, N157, N190, and 208–209 each bind substrate; these read GN and ER. C217 (proton acceptor) is an active-site residue. Residue 218-219 coordinates substrate; the sequence is GS.

This sequence belongs to the diaminopimelate epimerase family. As to quaternary structure, homodimer.

The protein resides in the cytoplasm. The enzyme catalyses (2S,6S)-2,6-diaminopimelate = meso-2,6-diaminopimelate. Its pathway is amino-acid biosynthesis; L-lysine biosynthesis via DAP pathway; DL-2,6-diaminopimelate from LL-2,6-diaminopimelate: step 1/1. Functionally, catalyzes the stereoinversion of LL-2,6-diaminopimelate (L,L-DAP) to meso-diaminopimelate (meso-DAP), a precursor of L-lysine and an essential component of the bacterial peptidoglycan. The polypeptide is Diaminopimelate epimerase (Proteus mirabilis (strain HI4320)).